The sequence spans 466 residues: UDP-N-acetylmuramoylalanine--D-glutamate ligase (466 aa).

Residue 121–127 (GTNGKST) participates in ATP binding.

Belongs to the MurCDEF family.

The protein localises to the cytoplasm. The enzyme catalyses UDP-N-acetyl-alpha-D-muramoyl-L-alanine + D-glutamate + ATP = UDP-N-acetyl-alpha-D-muramoyl-L-alanyl-D-glutamate + ADP + phosphate + H(+). Its pathway is cell wall biogenesis; peptidoglycan biosynthesis. Cell wall formation. Catalyzes the addition of glutamate to the nucleotide precursor UDP-N-acetylmuramoyl-L-alanine (UMA). The protein is UDP-N-acetylmuramoylalanine--D-glutamate ligase of Nitrobacter hamburgensis (strain DSM 10229 / NCIMB 13809 / X14).